Consider the following 256-residue polypeptide: Thiazole synthase (256 aa).

Lysine 91 functions as the Schiff-base intermediate with DXP in the catalytic mechanism. 1-deoxy-D-xylulose 5-phosphate is bound by residues glycine 152, 179–180 (AG), and 201–202 (NT).

It belongs to the ThiG family. Homotetramer. Forms heterodimers with either ThiH or ThiS.

Its subcellular location is the cytoplasm. The enzyme catalyses [ThiS sulfur-carrier protein]-C-terminal-Gly-aminoethanethioate + 2-iminoacetate + 1-deoxy-D-xylulose 5-phosphate = [ThiS sulfur-carrier protein]-C-terminal Gly-Gly + 2-[(2R,5Z)-2-carboxy-4-methylthiazol-5(2H)-ylidene]ethyl phosphate + 2 H2O + H(+). Its pathway is cofactor biosynthesis; thiamine diphosphate biosynthesis. Catalyzes the rearrangement of 1-deoxy-D-xylulose 5-phosphate (DXP) to produce the thiazole phosphate moiety of thiamine. Sulfur is provided by the thiocarboxylate moiety of the carrier protein ThiS. In vitro, sulfur can be provided by H(2)S. The chain is Thiazole synthase from Erwinia tasmaniensis (strain DSM 17950 / CFBP 7177 / CIP 109463 / NCPPB 4357 / Et1/99).